The following is a 423-amino-acid chain: Cop9 signalosome complex subunit 12 (423 aa).

A PCI domain is found at 232-418; it reads GFFHLNEALL…RCIVFSKKEP (187 aa).

The protein belongs to the CSN12 family. In terms of assembly, component of a COP9 signalosome-like (CSN) complex, composed of RRI1/CSN5, CSN9, RRI2/CSN10, PCI8/CSN11, CSN12 and CSI1. In the complex, it probably interacts directly with RRI1/CSN5, CSN9, RRI2/CSN10 and CSI1. Interacts with SEM1 and THP3.

It localises to the cytoplasm. The protein resides in the nucleus. Functionally, component of the COP9 signalosome (CSN) complex that acts as an regulator of the ubiquitin (Ubl) conjugation pathway by mediating the deneddylation of the cullin subunit of SCF-type E3 ubiquitin-protein ligase complexes. The CSN complex is involved in the regulation of the mating pheromone response. CSN12 forms a complex with THP3 that is recruited to transcribed genes and required for transcription elongation. The sequence is that of Cop9 signalosome complex subunit 12 (CSN12) from Saccharomyces cerevisiae (strain ATCC 204508 / S288c) (Baker's yeast).